A 195-amino-acid polypeptide reads, in one-letter code: HTH-type transcriptional regulator BetI (195 aa).

Residues 8 to 68 (SIRRRQLIDA…ATMRDITSQL (61 aa)) enclose the HTH tetR-type domain. Residues 31-50 (TIAQIARRAGVSTGIISHYF) constitute a DNA-binding region (H-T-H motif).

The protein operates within amine and polyamine biosynthesis; betaine biosynthesis via choline pathway [regulation]. Its function is as follows. Repressor involved in the biosynthesis of the osmoprotectant glycine betaine. It represses transcription of the choline transporter BetT and the genes of BetAB involved in the synthesis of glycine betaine. The protein is HTH-type transcriptional regulator BetI of Escherichia coli (strain SMS-3-5 / SECEC).